Here is a 328-residue protein sequence, read N- to C-terminus: Urokinase plasminogen activator surface receptor (328 aa).

The first 24 residues, methionine 1–glycine 24, serve as a signal peptide directing secretion. 3 UPAR/Ly6 domains span residues leucine 25–leucine 118, leucine 118–glycine 213, and phenylalanine 214–glycine 299. Cystine bridges form between cysteine 27–cysteine 48, cysteine 30–cysteine 36, and cysteine 41–cysteine 69. Asparagine 76 is a glycosylation site (N-linked (GlcNAc...) asparagine). 11 disulfide bridges follow: cysteine 95-cysteine 100, cysteine 120-cysteine 147, cysteine 123-cysteine 130, cysteine 140-cysteine 169, cysteine 175-cysteine 192, cysteine 193-cysteine 198, cysteine 216-cysteine 244, cysteine 219-cysteine 227, cysteine 237-cysteine 263, cysteine 269-cysteine 288, and cysteine 289-cysteine 294. Residues asparagine 184, asparagine 194, asparagine 222, asparagine 255, asparagine 283, and asparagine 290 are each glycosylated (N-linked (GlcNAc...) asparagine). Glycine 299 is lipidated: GPI-anchor amidated glycine. The propeptide at glycine 300–threonine 328 is removed in mature form.

As to quaternary structure, monomer. Interacts (via the UPAR/Ly6 domains) with SRPX2. Interacts with MRC2. Interacts with SORL1 (via N-terminal ectodomain); this interaction decreases PLAUR internalization. The ternary complex composed of PLAUR-PLAU-SERPINE1 also interacts with SORL1. Interacts with CD82; this interaction prevents PLAUR from binding to its high affinity ligand PLAU.

It localises to the cell membrane. The protein localises to the secreted. Acts as a receptor for urokinase plasminogen activator. Plays a role in localizing and promoting plasmin formation. Mediates the proteolysis-independent signal transduction activation effects of U-PA. In Rattus norvegicus (Rat), this protein is Urokinase plasminogen activator surface receptor (Plaur).